Consider the following 448-residue polypeptide: tRNA-2-methylthio-N(6)-dimethylallyladenosine synthase (448 aa).

The region spanning K2–E120 is the MTTase N-terminal domain. [4Fe-4S] cluster contacts are provided by C11, C47, C81, C158, C162, and C165. The region spanning R144–E374 is the Radical SAM core domain. In terms of domain architecture, TRAM spans E377–Y440.

Belongs to the methylthiotransferase family. MiaB subfamily. In terms of assembly, monomer. The cofactor is [4Fe-4S] cluster.

The protein resides in the cytoplasm. The catalysed reaction is N(6)-dimethylallyladenosine(37) in tRNA + (sulfur carrier)-SH + AH2 + 2 S-adenosyl-L-methionine = 2-methylsulfanyl-N(6)-dimethylallyladenosine(37) in tRNA + (sulfur carrier)-H + 5'-deoxyadenosine + L-methionine + A + S-adenosyl-L-homocysteine + 2 H(+). Functionally, catalyzes the methylthiolation of N6-(dimethylallyl)adenosine (i(6)A), leading to the formation of 2-methylthio-N6-(dimethylallyl)adenosine (ms(2)i(6)A) at position 37 in tRNAs that read codons beginning with uridine. The protein is tRNA-2-methylthio-N(6)-dimethylallyladenosine synthase of Pelotomaculum thermopropionicum (strain DSM 13744 / JCM 10971 / SI).